A 291-amino-acid chain; its full sequence is N-acetylmannosamine kinase (291 aa).

ATP contacts are provided by residues 5–12 (AIDIGGTK) and 132–139 (GVGGGVVS). Zn(2+)-binding residues include His156, Cys166, Cys168, and Cys173.

The protein belongs to the ROK (NagC/XylR) family. NanK subfamily. As to quaternary structure, homodimer.

It carries out the reaction an N-acyl-D-mannosamine + ATP = an N-acyl-D-mannosamine 6-phosphate + ADP + H(+). The protein operates within amino-sugar metabolism; N-acetylneuraminate degradation; D-fructose 6-phosphate from N-acetylneuraminate: step 2/5. Its function is as follows. Catalyzes the phosphorylation of N-acetylmannosamine (ManNAc) to ManNAc-6-P. The chain is N-acetylmannosamine kinase from Escherichia coli O127:H6 (strain E2348/69 / EPEC).